Here is a 293-residue protein sequence, read N- to C-terminus: MLVDLNVPWPQNSYADKVTSQAVNNLIKTLSTLHMLGYTHIAINFTVNHSEKFPNDVKLLNPIDIKRRFGELMDRTGLKLYSRITLIIDDPSKGQSLSKISQAFDIVAALPISEKGLTLSTTNLDIDLLTFQYGSRLPTFLKHKSICSCVNRGVKLEIVYGYALRDVQARRQFVSNVRSVIRSSRSRGIVIGSGAMSPLECRNILGVTSLIKNLGLPSDRCSKAMGDLASLVLLNGRLRNKSHKQTIVTGGGSGNGDDVVNDVQGIDDVQTIKVVKRSMDAEQLGHASKRHKP.

This sequence belongs to the eukaryotic/archaeal RNase P protein component 3 family. As to quaternary structure, component of nuclear RNase P and RNase MRP complexes. RNase P consists of an RNA moiety and at least 9 protein subunits including POP1, POP3, POP4, POP5, POP6, POP7, POP8, RPP1 and RPR2. RNase MRP complex consists of an RNA moiety and at least 10 protein subunits including POP1, POP3, POP4, POP5, POP6, POP7, POP8, RMP1, RPP1 and SNM1, many of which are shared with the RNase P complex.

The protein resides in the nucleus. The enzyme catalyses Endonucleolytic cleavage of RNA, removing 5'-extranucleotides from tRNA precursor.. Component of ribonuclease P, a protein complex that generates mature tRNA molecules by cleaving their 5'-ends. Also a component of RNase MRP, which cleaves pre-rRNA sequences. The polypeptide is Ribonuclease P/MRP protein subunit RPP1 (RPP1) (Saccharomyces cerevisiae (strain ATCC 204508 / S288c) (Baker's yeast)).